We begin with the raw amino-acid sequence, 924 residues long: Exocyst complex component 2 (924 aa).

The IPT/TIG domain maps to Pro8–Leu93. Residues Gln240–Val260 adopt a coiled-coil conformation. Residues Ser431, Ser432, and Ser435 each carry the phosphoserine modification. Thr440 is subject to Phosphothreonine. The residue at position 454 (Lys454) is an N6-acetyllysine. The residue at position 888 (Ser888) is a Phosphoserine.

The protein belongs to the SEC5 family. As to quaternary structure, the exocyst complex is composed of EXOC1, EXOC2, EXOC3, EXOC4, EXOC5, EXOC6, EXOC7 and EXOC8. Interacts with EXOC3L1. Interacts with GNEFR/DELGEF; this interaction occurs only in the presence of magnesium or manganese and is stimulated by dCTP or GTP. Interacts with RALA and RALB. Interacts with ARL13B; regulates ARL13B localization to the cilium membrane. In terms of tissue distribution, widely expressed with highest levels in brain and placenta.

It localises to the midbody. Its subcellular location is the midbody ring. Component of the exocyst complex involved in the docking of exocytic vesicles with fusion sites on the plasma membrane. The chain is Exocyst complex component 2 (EXOC2) from Homo sapiens (Human).